Reading from the N-terminus, the 146-residue chain is Type II secretion system core protein G (146 aa).

Positions 1 to 9 (MKKMRKQTG) are cleaved as a propeptide — leader sequence. Phe-10 carries the post-translational modification N-methylphenylalanine. The helical transmembrane segment at 10–30 (FTLLEVMVVVVILGILASFVV) threads the bilayer.

Belongs to the GSP G family. In terms of assembly, type II secretion system is composed of four main components: the outer membrane complex, the inner membrane complex, the cytoplasmic secretion ATPase and the periplasm-spanning pseudopilus. Forms homomultimers. Interacts with EspL. Post-translationally, cleaved by the prepilin peptidase. In terms of processing, methylated by prepilin peptidase at the amino group of the N-terminal phenylalanine once the leader sequence is cleaved.

The protein localises to the cell inner membrane. In terms of biological role, core component of the type II secretion system required for the energy-dependent secretion of extracellular factors such as proteases and toxins from the periplasm. Pseudopilin (pilin-like) protein that polymerizes to form the pseudopilus. Further polymerization triggers pseudopilus growth. The polypeptide is Type II secretion system core protein G (epsG) (Vibrio cholerae serotype O1 (strain ATCC 39315 / El Tor Inaba N16961)).